The primary structure comprises 336 residues: D-erythrose-4-phosphate dehydrogenase (336 aa).

NAD(+) contacts are provided by residues 11–12 (RI) and R80. Residues 153–155 (SCT), R199, 212–213 (TK), and R235 contribute to the substrate site. C154 functions as the Nucleophile in the catalytic mechanism. N317 lines the NAD(+) pocket.

Belongs to the glyceraldehyde-3-phosphate dehydrogenase family. Epd subfamily. As to quaternary structure, homotetramer.

It is found in the cytoplasm. The enzyme catalyses D-erythrose 4-phosphate + NAD(+) + H2O = 4-phospho-D-erythronate + NADH + 2 H(+). It functions in the pathway cofactor biosynthesis; pyridoxine 5'-phosphate biosynthesis; pyridoxine 5'-phosphate from D-erythrose 4-phosphate: step 1/5. Functionally, catalyzes the NAD-dependent conversion of D-erythrose 4-phosphate to 4-phosphoerythronate. This chain is D-erythrose-4-phosphate dehydrogenase, found in Aeromonas hydrophila subsp. hydrophila (strain ATCC 7966 / DSM 30187 / BCRC 13018 / CCUG 14551 / JCM 1027 / KCTC 2358 / NCIMB 9240 / NCTC 8049).